Consider the following 478-residue polypeptide: JmjC domain-containing histone demethylation protein 1 (478 aa).

Residues 6–70 (VKCHFCKKDD…HVESFKCTLH (65 aa)) form a PHD-type zinc finger. The JmjC domain maps to 242–401 (SHVESFKDGI…TQLNVVEIEH (160 aa)). Thr-294 contacts substrate. His-297 and Asp-299 together coordinate Fe cation. Lys-314 lines the substrate pocket. Residue His-369 participates in Fe cation binding.

This sequence belongs to the JHDM1 histone demethylase family. The cofactor is Fe(2+).

It localises to the nucleus. It carries out the reaction N(6),N(6)-dimethyl-L-lysyl(36)-[histone H3] + 2 2-oxoglutarate + 2 O2 = L-lysyl(36)-[histone H3] + 2 formaldehyde + 2 succinate + 2 CO2. Functionally, histone demethylase that specifically demethylates 'Lys-36' of histone H3, thereby playing a central role in histone code. This Kluyveromyces lactis (strain ATCC 8585 / CBS 2359 / DSM 70799 / NBRC 1267 / NRRL Y-1140 / WM37) (Yeast) protein is JmjC domain-containing histone demethylation protein 1 (JHD1).